The sequence spans 419 residues: Peptide chain release factor subunit 1 (419 aa).

Belongs to the eukaryotic release factor 1 family. In terms of assembly, heterodimer of two subunits, one of which binds GTP.

The protein resides in the cytoplasm. Its function is as follows. Directs the termination of nascent peptide synthesis (translation) in response to the termination codons UAA, UAG and UGA. This Methanococcus maripaludis (strain C5 / ATCC BAA-1333) protein is Peptide chain release factor subunit 1.